The sequence spans 475 residues: Ribulose bisphosphate carboxylase large chain (475 aa).

A propeptide spanning residues 1-2 (MS) is cleaved from the precursor. Pro-3 is modified (N-acetylproline). Lys-14 carries the N6,N6,N6-trimethyllysine modification. Substrate-binding residues include Asn-123 and Thr-173. The active-site Proton acceptor is the Lys-175. Lys-177 contacts substrate. 3 residues coordinate Mg(2+): Lys-201, Asp-203, and Glu-204. Residue Lys-201 is modified to N6-carboxylysine. Residue His-294 is the Proton acceptor of the active site. Substrate-binding residues include Arg-295, His-327, and Ser-379.

This sequence belongs to the RuBisCO large chain family. Type I subfamily. As to quaternary structure, heterohexadecamer of 8 large chains and 8 small chains; disulfide-linked. The disulfide link is formed within the large subunit homodimers. Mg(2+) serves as cofactor. The disulfide bond which can form in the large chain dimeric partners within the hexadecamer appears to be associated with oxidative stress and protein turnover.

Its subcellular location is the plastid. It is found in the chloroplast. The catalysed reaction is 2 (2R)-3-phosphoglycerate + 2 H(+) = D-ribulose 1,5-bisphosphate + CO2 + H2O. It carries out the reaction D-ribulose 1,5-bisphosphate + O2 = 2-phosphoglycolate + (2R)-3-phosphoglycerate + 2 H(+). Its function is as follows. RuBisCO catalyzes two reactions: the carboxylation of D-ribulose 1,5-bisphosphate, the primary event in carbon dioxide fixation, as well as the oxidative fragmentation of the pentose substrate in the photorespiration process. Both reactions occur simultaneously and in competition at the same active site. The chain is Ribulose bisphosphate carboxylase large chain from Cerastium glomeratum (Sticky chickweed).